The sequence spans 105 residues: Large ribosomal subunit protein uL24 (105 aa).

It belongs to the universal ribosomal protein uL24 family. As to quaternary structure, part of the 50S ribosomal subunit.

One of two assembly initiator proteins, it binds directly to the 5'-end of the 23S rRNA, where it nucleates assembly of the 50S subunit. Functionally, one of the proteins that surrounds the polypeptide exit tunnel on the outside of the subunit. The polypeptide is Large ribosomal subunit protein uL24 (Methylobacterium sp. (strain 4-46)).